The sequence spans 349 residues: Transcription elongation factor A protein 3 (349 aa).

The 78-residue stretch at 5–82 folds into the TFIIS N-terminal domain; it reads EELLRIAKKL…RNWKQLLDSP (78 aa). The segment at 80–170 is disordered; sequence DSPATPKGEK…RTPSSPSSPT (91 aa). Residues 101–110 are compositionally biased toward basic and acidic residues; the sequence is KGLDCSDWKP. Ser-115 is modified (phosphoserine). The segment covering 121 to 133 has biased composition (basic and acidic residues); it reads RVEEPKDRRDSVD. Composition is skewed to low complexity over residues 134 to 144 and 160 to 170; these read SKSSATSSPKR and PRTPSSPSSPT. Residue Ser-141 is modified to Phosphoserine. In terms of domain architecture, TFIIS central spans 188-304; the sequence is VRDKCVEMLS…EHQMAKTGGT (117 aa). Residues 307 to 347 form a TFIIS-type zinc finger; that stretch reads DLFQCSKCKKKNCTYNQVQTRSADEPMTTFVLCNECGNRWK. The Zn(2+) site is built by Cys-311, Cys-314, Cys-339, and Cys-342.

Belongs to the TFS-II family.

It localises to the nucleus. Necessary for efficient RNA polymerase II transcription elongation past template-encoded arresting sites. The arresting sites in DNA have the property of trapping a certain fraction of elongating RNA polymerases that pass through, resulting in locked ternary complexes. Cleavage of the nascent transcript by S-II allows the resumption of elongation from the new 3'-terminus. The sequence is that of Transcription elongation factor A protein 3 (TCEA3) from Bos taurus (Bovine).